Consider the following 176-residue polypeptide: Siroheme decarboxylase alpha subunit (176 aa).

The disordered stretch occupies residues 1–24 (MTEAHNACCHPSGTAAGHHGAGKA). Residues 12-24 (SGTAAGHHGAGKA) are compositionally biased toward low complexity.

Belongs to the Ahb/Nir family. As to quaternary structure, forms a heterodimer composed of AhbA and AhbB. Also forms heterotetramers.

The enzyme catalyses siroheme + 2 H(+) = 12,18-didecarboxysiroheme + 2 CO2. The protein operates within porphyrin-containing compound metabolism; protoheme biosynthesis. In terms of biological role, involved in siroheme-dependent heme b biosynthesis. Catalyzes the decarboxylation of siroheme into didecarboxysiroheme. The sequence is that of Siroheme decarboxylase alpha subunit from Nitratidesulfovibrio vulgaris (strain ATCC 29579 / DSM 644 / CCUG 34227 / NCIMB 8303 / VKM B-1760 / Hildenborough) (Desulfovibrio vulgaris).